We begin with the raw amino-acid sequence, 346 residues long: Glycerol-3-phosphate dehydrogenase [NAD(P)+] (346 aa).

The NADPH site is built by Ser-15, Trp-16, Arg-36, and Lys-110. Sn-glycerol 3-phosphate is bound by residues Lys-110, Gly-139, and Ser-141. Residue Ala-143 participates in NADPH binding. Residues Lys-194, Asp-247, Ser-257, Arg-258, and Asn-259 each coordinate sn-glycerol 3-phosphate. The active-site Proton acceptor is the Lys-194. An NADPH-binding site is contributed by Arg-258. NADPH is bound by residues Val-282 and Glu-284.

It belongs to the NAD-dependent glycerol-3-phosphate dehydrogenase family.

Its subcellular location is the cytoplasm. The enzyme catalyses sn-glycerol 3-phosphate + NAD(+) = dihydroxyacetone phosphate + NADH + H(+). It catalyses the reaction sn-glycerol 3-phosphate + NADP(+) = dihydroxyacetone phosphate + NADPH + H(+). Its pathway is membrane lipid metabolism; glycerophospholipid metabolism. Catalyzes the reduction of the glycolytic intermediate dihydroxyacetone phosphate (DHAP) to sn-glycerol 3-phosphate (G3P), the key precursor for phospholipid synthesis. This chain is Glycerol-3-phosphate dehydrogenase [NAD(P)+], found in Xylella fastidiosa (strain M23).